Consider the following 347-residue polypeptide: F-box/kelch-repeat protein At5g03020 (347 aa).

Residues 1-21 (MTEEMSKESPPPPPTSFSSLP) are disordered. One can recognise an F-box domain in the interval 14–62 (PTSFSSLPDDVALDCRARISRFHYPTLSLVSKGFRTLIASPELEATRSF). Kelch repeat units lie at residues 119-165 (QIYI…VIDG) and 167-215 (IYVI…KKKH).

The polypeptide is F-box/kelch-repeat protein At5g03020 (Arabidopsis thaliana (Mouse-ear cress)).